The chain runs to 343 residues: Small ribosomal subunit biogenesis GTPase RsgA (343 aa).

In terms of domain architecture, CP-type G spans 116 to 275 (RGQLKPVAAN…LIDSPGIREF (160 aa)). GTP-binding positions include 163 to 166 (NKFD) and 217 to 225 (GQSGVGKSS). Zn(2+)-binding residues include cysteine 299, cysteine 304, histidine 306, and cysteine 312.

Belongs to the TRAFAC class YlqF/YawG GTPase family. RsgA subfamily. In terms of assembly, monomer. Associates with 30S ribosomal subunit, binds 16S rRNA. Zn(2+) serves as cofactor.

It localises to the cytoplasm. One of several proteins that assist in the late maturation steps of the functional core of the 30S ribosomal subunit. Helps release RbfA from mature subunits. May play a role in the assembly of ribosomal proteins into the subunit. Circularly permuted GTPase that catalyzes slow GTP hydrolysis, GTPase activity is stimulated by the 30S ribosomal subunit. This Pseudomonas fluorescens (strain Pf0-1) protein is Small ribosomal subunit biogenesis GTPase RsgA.